The chain runs to 286 residues: uncharacterized protein (286 aa).

A run of 2 helical transmembrane segments spans residues 201 to 221 (VIYS…LCET) and 231 to 251 (AIIL…YLMM).

It is found in the cell membrane. This is an uncharacterized protein from Methanocaldococcus jannaschii (strain ATCC 43067 / DSM 2661 / JAL-1 / JCM 10045 / NBRC 100440) (Methanococcus jannaschii).